A 437-amino-acid polypeptide reads, in one-letter code: UDP-N-acetylmuramoylalanine--D-glutamate ligase (437 aa).

112 to 118 (GSNGKST) contacts ATP.

This sequence belongs to the MurCDEF family.

The protein resides in the cytoplasm. It carries out the reaction UDP-N-acetyl-alpha-D-muramoyl-L-alanine + D-glutamate + ATP = UDP-N-acetyl-alpha-D-muramoyl-L-alanyl-D-glutamate + ADP + phosphate + H(+). It functions in the pathway cell wall biogenesis; peptidoglycan biosynthesis. In terms of biological role, cell wall formation. Catalyzes the addition of glutamate to the nucleotide precursor UDP-N-acetylmuramoyl-L-alanine (UMA). The sequence is that of UDP-N-acetylmuramoylalanine--D-glutamate ligase from Haemophilus influenzae (strain 86-028NP).